A 280-amino-acid polypeptide reads, in one-letter code: Lysosome-associated membrane glycoprotein 5 (280 aa).

An N-terminal signal peptide occupies residues 1-29 (MDLRVRTLLGGDRLRILLMFFHVMVQTVA). The Extracellular portion of the chain corresponds to 30–235 (EQEVENLSGL…PVDEQEQLEE (206 aa)). Residues N35, N53, N102, and N127 are each glycosylated (N-linked (GlcNAc...) asparagine). Residues 236-256 (TLPLILGLILGLVIVITLVIY) traverse the membrane as a helical segment. Over 257–280 (HIHHKMTANQVQIPRDRSQYKHMG) the chain is Cytoplasmic.

This sequence belongs to the LAMP family. In terms of processing, glycosylated. As to expression, in brain, strongly expressed in the globus pallidus/ventral pallidum complex, the substantia nigra pars reticulata and the entopeduncular nucleus (at protein level). Expressed in the external plexiform layer of the olfactory bulb (at protein level). May be weakly expressed in neocortex and striatum (at protein level). Highly expressed in brain; not detected in other tissues tested. Detected in the cingulate cortex, cortical plate and caudate putamen. In neocortex, specifically expressed in neurons of layers II/III and V.

It localises to the cytoplasmic vesicle membrane. It is found in the cell membrane. The protein resides in the cell projection. Its subcellular location is the dendrite. The protein localises to the cytoplasmic vesicle. It localises to the secretory vesicle. It is found in the synaptic vesicle membrane. The protein resides in the growth cone membrane. Its subcellular location is the early endosome membrane. The protein localises to the recycling endosome. It localises to the endoplasmic reticulum-Golgi intermediate compartment membrane. It is found in the endosome membrane. Functionally, plays a role in short-term synaptic plasticity in a subset of GABAergic neurons in the brain. The chain is Lysosome-associated membrane glycoprotein 5 (Lamp5) from Mus musculus (Mouse).